The primary structure comprises 645 residues: MPKTFTQIPLTRPNTPLLDTLASPADLRKLPTPQLERVVDELREYLLYAVGQCGGHFGAGLGVVELTVALHYLYHTPDDKLVWDVGHQCYPHKILTGRRESLTSIRQAGGLSGFPKRSESEYDTFGVGHSSTSISAALGMALGAEMAGSDRRAVAIIGDGAMTAGQAFEAMSHAAHTRSNLLVILNDNNMSISHNVGGLSNYFARIWASKSYIALREGGKKVLSTMPAAWDFIRRTEESMKNMVSPDMLFEAIGFNYIGPIDGHNVNELVSTLRNLRDLEGPQLLHVYTTKGKGFAPAEADPVGYHAINKIEPKPKVQVAVPSKPSAAKQKLPKYQDIFGQWLCDMAEQDPRLVGITPAMCEGSGMVEFSRRFPGRYHDVAICEQHAVTLAGGLACENQKPVVAIYSTFLQRGYDQLIHDVALQELDVTFGLDRAGLVGEDGATHGGVFDLAYLRTVPNMIIAAPSDENECRQLLYSAYQHEGPAAVRYPRGTGPGATIEQTMTALPIGQSRTLREGLQVAILAFGAMVPAALEAAIPLNATVIDMRWVKPLDRDAILRAAAQHTLLVTVEDHQQMGGAGSAVNELLHEEAVVLDVLNLALPDHFIHHGKRDVLLAQAGLDAAGIERQIRERLNRQQRLREAHQR.

Thiamine diphosphate-binding positions include histidine 87 and 128–130; that span reads GHS. Aspartate 159 provides a ligand contact to Mg(2+). Residues 160–161, asparagine 188, phenylalanine 295, and glutamate 384 contribute to the thiamine diphosphate site; that span reads GA. Asparagine 188 contacts Mg(2+).

The protein belongs to the transketolase family. DXPS subfamily. Homodimer. Requires Mg(2+) as cofactor. Thiamine diphosphate serves as cofactor.

It catalyses the reaction D-glyceraldehyde 3-phosphate + pyruvate + H(+) = 1-deoxy-D-xylulose 5-phosphate + CO2. It participates in metabolic intermediate biosynthesis; 1-deoxy-D-xylulose 5-phosphate biosynthesis; 1-deoxy-D-xylulose 5-phosphate from D-glyceraldehyde 3-phosphate and pyruvate: step 1/1. Its function is as follows. Catalyzes the acyloin condensation reaction between C atoms 2 and 3 of pyruvate and glyceraldehyde 3-phosphate to yield 1-deoxy-D-xylulose-5-phosphate (DXP). The sequence is that of 1-deoxy-D-xylulose-5-phosphate synthase from Alcanivorax borkumensis (strain ATCC 700651 / DSM 11573 / NCIMB 13689 / SK2).